We begin with the raw amino-acid sequence, 369 residues long: Aminomethyltransferase (369 aa).

It belongs to the GcvT family. In terms of assembly, the glycine cleavage system is composed of four proteins: P, T, L and H.

It carries out the reaction N(6)-[(R)-S(8)-aminomethyldihydrolipoyl]-L-lysyl-[protein] + (6S)-5,6,7,8-tetrahydrofolate = N(6)-[(R)-dihydrolipoyl]-L-lysyl-[protein] + (6R)-5,10-methylene-5,6,7,8-tetrahydrofolate + NH4(+). Functionally, the glycine cleavage system catalyzes the degradation of glycine. The protein is Aminomethyltransferase of Synechococcus sp. (strain WH7803).